The chain runs to 1531 residues: Myosin-17 (1531 aa).

A Myosin N-terminal SH3-like domain is found at 8–57; that stretch reads IVGSHVWIEDPGAAWIDGEVVKINGEEVHAHTTNGKTVVANIANVFPKDT. Residues 62 to 732 enclose the Myosin motor domain; sequence GGVDDMTKLS…QMAELDARRA (671 aa). Residues 156 to 163 and 209 to 217 each bind ATP; these read GESGAGKT and NNNSSRFGK. 4 actin-binding regions span residues 495–529, 531–554, 589–613, and 613–635; these read LIEK…YQTF, NYKR…AGEV, FPRL…KLQL, and LQSL…KPNN. 5 consecutive IQ domains span residues 758 to 787, 783 to 812, 806 to 835, 831 to 860, and 854 to 883; these read LRGA…QAAA, RQAA…STIT, IRHS…MKAA, QMKA…AALS, and LQKA…AARD. Residues 884–1056 are a coiled coil; that stretch reads TGALREAKDK…VLRQQALAIS (173 aa). Residues 1071–1090 are disordered; it reads LPRTPENGNYLNGGTKTTPD. Polar residues predominate over residues 1076–1090; it reads ENGNYLNGGTKTTPD. The Dilute domain maps to 1159–1470; that stretch reads DRIIQTIATA…IANMRVMMTE (312 aa). Serine 1517 bears the Phosphoserine mark.

The protein belongs to the TRAFAC class myosin-kinesin ATPase superfamily. Myosin family. Plant myosin class XI subfamily. As to quaternary structure, homodimer. Interacts with MYOB1, MYOB2 and MYOB3. Interacts with PHOX1 and PHOX2. As to expression, expressed ubiquitously.

Its subcellular location is the cytoplasm. Myosin heavy chain that is required for the cell cycle-regulated transport of various organelles and proteins for their segregation. Functions by binding with its tail domain to receptor proteins on organelles and exerting force with its N-terminal motor domain against actin filaments, thereby transporting its cargo along polarized actin cables. Involved in the tip growth of root hair cells and in the elongation of trichome stalk and branches. Plays a major role in trafficking of Golgi stacks, mitochondria and peroxisomes during root hair development. Acts as the primary contributor to ER streaming with a major role in the movement of Golgi bodies. Required for development of pavement cells, trichomes, and stigmatic papillae. Together with XI-F, required for the regulation of organ bending, such as gravitropic root bending. This is Myosin-17 from Arabidopsis thaliana (Mouse-ear cress).